Consider the following 938-residue polypeptide: Collagen alpha-1(I) chain (938 aa).

Residues 1–938 form a disordered region; it reads GGISVPGPMG…PGPPGPPGPP (938 aa). Residues P18, P21, P24, P33, P36, P39, P54, P69, P75, P84, and P90 each carry the 4-hydroxyproline modification. Over residues 26–45 the composition is skewed to low complexity; the sequence is PQGFQGPPGEPGEPGASGPM. The span at 57 to 71 shows a compositional bias: basic and acidic residues; the sequence is NGDDGEAGKPGRPGE. K93 is modified (5-hydroxylysine; alternate). K93 carries an O-linked (Gal...) hydroxylysine; alternate glycan. A Phosphoserine modification is found at S99. Over residues 107–135 the composition is skewed to low complexity; the sequence is DAGPAGPKGRPGASGPAGARGNDGATGAA. 12 positions are modified to 4-hydroxyproline: P117, P138, P147, P150, P177, P180, P192, P198, P207, P213, P216, and P231. Residues 137–149 are compositionally biased toward pro residues; it reads PPGPTGPAGPPGF. The segment covering 183-222 has biased composition (low complexity); it reads AGAAGPAGNPGADGQPGAKGANGAPGIAGAPGFPGARGPS. A 5-hydroxylysine modification is found at K234. P240, P243, P255, P264, P279, P285, P294, and P300 each carry 4-hydroxyproline. Residues 289-298 show a composition bias toward gly residues; sequence GERGGPGSRG. K309 is subject to 5-hydroxylysine. 25 positions are modified to 4-hydroxyproline: P314, P323, P329, P335, P344, P347, P356, P365, P371, P383, P392, P401, P404, P422, P439, P445, P451, P458, P464, P476, P485, P497, P503, P509, and P518. Residues 338-364 show a composition bias toward low complexity; sequence KGLTGSPGSPGPDGKTGPPGPAGQDGR. The segment covering 373–392 has biased composition (low complexity); it reads ARGQAGVMGFPGPKGAAGEP. The residue at position 530 (K530) is a 5-hydroxylysine. Residues P536, P551, and P557 each carry the 4-hydroxyproline modification. The segment covering 563 to 577 has biased composition (low complexity); the sequence is SGPSGPAGPTGARGA. S566 bears the Phosphoserine mark. P578, P584, P587, P596, P602, P620, P629, and P638 each carry 4-hydroxyproline. Over residues 590-617 the composition is skewed to low complexity; it reads AGFAGPPGADGQPGAKGEPGDAGAKGDA. The segment covering 619–631 has biased composition (pro residues); that stretch reads PPGPAGPTGPPGP. A 5-hydroxylysine modification is found at K641. A compositionally biased stretch (low complexity) spans 646-662; that stretch reads SAGPPGATGFPGAAGRV. 2 positions are modified to 4-hydroxyproline: P650 and P656. P664 carries the 3-hydroxyproline modification. P665, P674, P677, P693, P703, P712, P730, P739, P742, P748, P763, P769, P775, P784, and P790 each carry 4-hydroxyproline. Residues 762-772 show a composition bias toward pro residues; it reads PPGPMGPPGLA. Position 799 is a 5-hydroxylysine (K799). Positions 807 to 822 are enriched in pro residues; the sequence is PGPPGAPGAPGAPGPV. Residues P810, P813, and P816 each carry the 4-hydroxyproline modification. Residues 843–867 are compositionally biased toward low complexity; it reads AGPAGARGPAGPQGPRRGFSGLQGP. A 4-hydroxyproline mark is found at P871, P874, P892, and P907. The segment covering 874-907 has biased composition (low complexity); that stretch reads PGEQGPSGASGPAGPRGPPGSAGSPGKDGLNGLP. P912 carries the post-translational modification 3-hydroxyproline. P913 is modified (4-hydroxyproline). Pro residues predominate over residues 923–938; that stretch reads VGPPGPPGPPGPPGPP. The residue at position 925 (P925) is a 3-hydroxyproline. P926 bears the 4-hydroxyproline mark. P928 bears the 3-hydroxyproline mark. P929 bears the 4-hydroxyproline mark. 3-hydroxyproline is present on P931. 4-hydroxyproline occurs at positions 932, 935, and 938.

It belongs to the fibrillar collagen family. Trimers of one alpha 2(I) and two alpha 1(I) chains. Contains mostly 4-hydroxyproline. Proline residues at the third position of the tripeptide repeating unit (G-X-Y) are hydroxylated in some or all of the chains. Post-translationally, contains 3-hydroxyproline at a few sites. This modification occurs on the first proline residue in the sequence motif Gly-Pro-Hyp, where Hyp is 4-hydroxyproline. In terms of processing, lysine residues at the third position of the tripeptide repeating unit (G-X-Y) are 5-hydroxylated in some or all of the chains. O-glycosylated on hydroxylated lysine residues. The O-linked glycan consists of a Glc-Gal disaccharide. In terms of tissue distribution, expressed in bones.

The protein localises to the secreted. It is found in the extracellular space. The protein resides in the extracellular matrix. Its function is as follows. Type I collagen is a member of group I collagen (fibrillar forming collagen). The protein is Collagen alpha-1(I) chain of Megalonyx jeffersonii (Jefferson's ground sloth).